A 354-amino-acid polypeptide reads, in one-letter code: Ferrochelatase (354 aa).

His214 and Glu295 together coordinate Fe cation.

This sequence belongs to the ferrochelatase family.

The protein resides in the cytoplasm. The enzyme catalyses heme b + 2 H(+) = protoporphyrin IX + Fe(2+). The protein operates within porphyrin-containing compound metabolism; protoheme biosynthesis; protoheme from protoporphyrin-IX: step 1/1. Its function is as follows. Catalyzes the ferrous insertion into protoporphyrin IX. The protein is Ferrochelatase of Burkholderia vietnamiensis (strain G4 / LMG 22486) (Burkholderia cepacia (strain R1808)).